Reading from the N-terminus, the 140-residue chain is Profilin-2 (140 aa).

A2 carries the post-translational modification N-acetylalanine.

It belongs to the profilin family. Occurs in many kinds of cells as a complex with monomeric actin in a 1:1 ratio. Interacts with PFN2. Interacts with ACTMAP (via N-terminus); the interaction may facilitate efficient cleavage of the acetylated N-terminus of immature actin by ACTMAP.

The protein resides in the cytoplasm. It localises to the cytoskeleton. Its function is as follows. Binds to actin and affects the structure of the cytoskeleton. At high concentrations, profilin prevents the polymerization of actin, whereas it enhances it at low concentrations. By binding to PIP2, it inhibits the formation of IP3 and DG. This chain is Profilin-2 (Pfn2), found in Rattus norvegicus (Rat).